Reading from the N-terminus, the 43-residue chain is DRDSCVDKSQCAKYGYYYQCDECCKKAGDRAGTCEYFKCKCNP.

Intrachain disulfides connect cysteine 5-cysteine 23, cysteine 11-cysteine 34, cysteine 20-cysteine 39, and cysteine 24-cysteine 41.

Belongs to the ergtoxin family. Gamma-KTx 4 subfamily. In terms of tissue distribution, expressed by the venom gland.

Its subcellular location is the secreted. Functionally, reversibly blocks Kv11/ERG potassium channels. In Centruroides exilicauda (Bark scorpion), this protein is Potassium channel toxin gamma-KTx 4.5.